A 449-amino-acid polypeptide reads, in one-letter code: Phosphoglucosamine mutase (449 aa).

Serine 105 serves as the catalytic Phosphoserine intermediate. 4 residues coordinate Mg(2+): serine 105, aspartate 242, aspartate 244, and aspartate 246. Serine 105 bears the Phosphoserine mark.

Belongs to the phosphohexose mutase family. Mg(2+) is required as a cofactor. Post-translationally, activated by phosphorylation.

The catalysed reaction is alpha-D-glucosamine 1-phosphate = D-glucosamine 6-phosphate. Catalyzes the conversion of glucosamine-6-phosphate to glucosamine-1-phosphate. In Clavibacter sepedonicus (Clavibacter michiganensis subsp. sepedonicus), this protein is Phosphoglucosamine mutase.